The primary structure comprises 237 residues: N-alpha-acetyltransferase 40 (237 aa).

Gly-2 carries the N-myristoyl glycine lipid modification. Residues 63–216 (SGLEPATVDW…EDCSYEILSR (154 aa)) enclose the N-acetyltransferase domain. Residues Tyr-85, 127–129 (DVE), and Tyr-138 contribute to the substrate site. Acetyl-CoA contacts are provided by residues 140 to 142 (VQL) and 148 to 153 (RKGLGK). Residue Thr-174 participates in substrate binding. Asn-179 is a binding site for acetyl-CoA. Substrate contacts are provided by Ser-197 and Tyr-211.

The protein belongs to the acetyltransferase family. NAA40 subfamily. Widely expressed; with the highest expression level in liver and the lowest expression in brain (at protein level).

It localises to the cytoplasm. The protein localises to the nucleus. It catalyses the reaction N-terminal L-seryl-[histone H4] + acetyl-CoA = N-terminal N(alpha)-acetyl-L-seryl-[histone H4] + CoA + H(+). The enzyme catalyses N-terminal L-seryl-[histone H2A] + acetyl-CoA = N-terminal N(alpha)-acetyl-L-seryl-[histone H2A] + CoA + H(+). N-alpha-acetyltransferase that specifically mediates the acetylation of the N-terminal residues of histones H4 and H2A. In contrast to other N-alpha-acetyltransferase, has a very specific selectivity for histones H4 and H2A N-terminus and specifically recognizes the 'Ser-Gly-Arg-Gly sequence'. Acts as a negative regulator of apoptosis. May play a role in hepatic lipid metabolism. This Homo sapiens (Human) protein is N-alpha-acetyltransferase 40.